A 340-amino-acid chain; its full sequence is tRNA N6-adenosine threonylcarbamoyltransferase (340 aa).

2 residues coordinate Fe cation: histidine 115 and histidine 119. Residues 138–142 (VVSGG), aspartate 171, glycine 184, aspartate 188, and asparagine 278 contribute to the substrate site. Position 306 (aspartate 306) interacts with Fe cation.

The protein belongs to the KAE1 / TsaD family. The cofactor is Fe(2+).

The protein resides in the cytoplasm. It catalyses the reaction L-threonylcarbamoyladenylate + adenosine(37) in tRNA = N(6)-L-threonylcarbamoyladenosine(37) in tRNA + AMP + H(+). Its function is as follows. Required for the formation of a threonylcarbamoyl group on adenosine at position 37 (t(6)A37) in tRNAs that read codons beginning with adenine. Is involved in the transfer of the threonylcarbamoyl moiety of threonylcarbamoyl-AMP (TC-AMP) to the N6 group of A37, together with TsaE and TsaB. TsaD likely plays a direct catalytic role in this reaction. The protein is tRNA N6-adenosine threonylcarbamoyltransferase of Clostridium botulinum (strain Kyoto / Type A2).